A 130-amino-acid chain; its full sequence is Large ribosomal subunit protein eL22 (130 aa).

The disordered stretch occupies residues 1-21 (MPGKTAQKGGRPSGKGKKKKQ). Residues 17 to 20 (KKKK) carry the Nuclear localization signal motif.

Belongs to the eukaryotic ribosomal protein eL22 family.

This is Large ribosomal subunit protein eL22 (RPL22) from Tripneustes gratilla (Hawaian sea urchin).